We begin with the raw amino-acid sequence, 647 residues long: Frizzled-1 (647 aa).

Positions 1–69 are cleaved as a signal peptide; sequence MAEEEAPKKS…WLLEAPLLLG (69 aa). Topologically, residues 73–322 are extracellular; the sequence is QAAGQGPGQG…PEELRFSRTW (250 aa). The tract at residues 74-104 is disordered; sequence AAGQGPGQGPGPGQQPPPPPQQQQSGQQYNG. The FZ domain occupies 111–230; the sequence is PDHGYCQPIS…HGAGELCVGQ (120 aa). Disulfide bonds link cysteine 116–cysteine 177, cysteine 124–cysteine 170, cysteine 161–cysteine 198, cysteine 187–cysteine 227, and cysteine 191–cysteine 215. The N-linked (GlcNAc...) asparagine glycan is linked to asparagine 130. An N-linked (GlcNAc...) asparagine glycan is attached at asparagine 231. The helical transmembrane segment at 323-343 threads the bilayer; that stretch reads IGIWSVLCCASTLFTVLTYLV. Residues 344 to 354 lie on the Cytoplasmic side of the membrane; the sequence is DMRRFSYPERP. Residues 355–375 traverse the membrane as a helical segment; that stretch reads IIFLSGCYTAVAVAYIAGFLL. Residues 376–402 lie on the Extracellular side of the membrane; the sequence is EDRVVCNDKFAEDGARTVAQGTKKEGC. The helical transmembrane segment at 403 to 423 threads the bilayer; that stretch reads TILFMMLYFFSMASSIWWVIL. Residues 424-445 lie on the Cytoplasmic side of the membrane; it reads SLTWFLAAGMKWGHEAIEANSQ. Residues 446–466 traverse the membrane as a helical segment; the sequence is YFHLAAWAVPAIKTITILALG. Residues 467–489 lie on the Extracellular side of the membrane; it reads QVDGDVLSGVCFVGLNNVDALRG. The chain crosses the membrane as a helical span at residues 490–510; the sequence is FVLAPLFVYLFIGTSFLLAGF. The Cytoplasmic portion of the chain corresponds to 511-536; the sequence is VSLFRIRTIMKHDGTKTEKLEKLMVR. A helical membrane pass occupies residues 537 to 557; that stretch reads IGVFSVLYTVPATIVIACYFY. Topologically, residues 558–601 are extracellular; sequence EQAFRDQWERSWVAQSCKSYAIPCPHLQAGGGAPPHPPMSPDFT. The chain crosses the membrane as a helical span at residues 602 to 622; the sequence is VFMIKYLMTLIVGITSGFWIW. At 623–647 the chain is on the cytoplasmic side; that stretch reads SGKTLNSWRKFYTRLTNSKQGETTV. Positions 625 to 630 match the Lys-Thr-X-X-X-Trp motif, mediates interaction with the PDZ domain of Dvl family members motif; sequence KTLNSW. The PDZ-binding signature appears at 645 to 647; sequence TTV.

The protein belongs to the G-protein coupled receptor Fz/Smo family. As to quaternary structure, interacts with MYOC. Interacts with WNT7B. (Microbial infection) Interacts with C.difficile toxin TcdB; frizzled receptors constitute the major host receptors for TcdB in the colonic epithelium. Ubiquitinated by ZNRF3, leading to its degradation by the proteasome. Expressed in adult heart, placenta, lung, kidney, pancreas, prostate, and ovary and in fetal lung and kidney.

It is found in the cell membrane. Its function is as follows. Receptor for Wnt proteins. Activated by WNT3A, WNT3, WNT1 and to a lesser extent WNT2, but apparently not by WNT4, WNT5A, WNT5B, WNT6, WNT7A or WNT7B. Contradictory results showing activation by WNT7B have been described for mouse. Functions in the canonical Wnt/beta-catenin signaling pathway. The canonical Wnt/beta-catenin signaling pathway leads to the activation of disheveled proteins, inhibition of GSK-3 kinase, nuclear accumulation of beta-catenin and activation of Wnt target genes. A second signaling pathway involving PKC and calcium fluxes has been seen for some family members, but it is not yet clear if it represents a distinct pathway or if it can be integrated in the canonical pathway, as PKC seems to be required for Wnt-mediated inactivation of GSK-3 kinase. Both pathways seem to involve interactions with G-proteins. May be involved in transduction and intercellular transmission of polarity information during tissue morphogenesis and/or in differentiated tissues. Functionally, (Microbial infection) Acts as a receptor for C.difficile toxin TcdB in the colonic epithelium. This chain is Frizzled-1 (FZD1), found in Homo sapiens (Human).